The chain runs to 428 residues: Enolase (428 aa).

Q163 is a (2R)-2-phosphoglycerate binding site. E205 acts as the Proton donor in catalysis. Mg(2+) is bound by residues D242, E285, and D312. (2R)-2-phosphoglycerate is bound by residues K337, R366, S367, and K388. K337 functions as the Proton acceptor in the catalytic mechanism.

The protein belongs to the enolase family. Requires Mg(2+) as cofactor.

Its subcellular location is the cytoplasm. The protein resides in the secreted. It is found in the cell surface. It carries out the reaction (2R)-2-phosphoglycerate = phosphoenolpyruvate + H2O. It functions in the pathway carbohydrate degradation; glycolysis; pyruvate from D-glyceraldehyde 3-phosphate: step 4/5. Catalyzes the reversible conversion of 2-phosphoglycerate (2-PG) into phosphoenolpyruvate (PEP). It is essential for the degradation of carbohydrates via glycolysis. The protein is Enolase of Erythrobacter litoralis (strain HTCC2594).